Consider the following 239-residue polypeptide: Norbelladine 4'-O-methyltransferase 4 (239 aa).

Residues valine 55, glutamate 77, glycine 79–valine 80, serine 85, aspartate 103, and alanine 132 each bind S-adenosyl-L-methionine. Aspartate 155 provides a ligand contact to a divalent metal cation. Aspartate 157 lines the S-adenosyl-L-methionine pocket. A divalent metal cation-binding residues include aspartate 181 and asparagine 182.

Belongs to the class I-like SAM-binding methyltransferase superfamily. Cation-dependent O-methyltransferase family. Mg(2+) is required as a cofactor.

The enzyme catalyses norbelladine + S-adenosyl-L-methionine = 4'-O-methylnorbelladine + S-adenosyl-L-homocysteine + H(+). Its pathway is alkaloid biosynthesis. In terms of biological role, 4'-O-methyltransferase converting norbelladine to 4'-O-methylnorbelladine. 4'-O-methylnorbelladine is a precursor to all Amaryllidaceae alkaloids such as galanthamine, lycorine and haemanthamine, and including haemanthamine- and crinamine-type alkaloids, promising anticancer agents. The polypeptide is Norbelladine 4'-O-methyltransferase 4 (Narcissus aff. pseudonarcissus MK-2014 (Daffodil)).